A 393-amino-acid polypeptide reads, in one-letter code: Putative N(4)-(beta-N-acetylglucosaminyl)-L-asparaginase CG1827 (393 aa).

The first 23 residues, 1–23 (MRRHLRASLWILCLATMAFSILA), serve as a signal peptide directing secretion. 2 N-linked (GlcNAc...) asparagine glycosylation sites follow: Asn-49 and Asn-64. 2 disulfide bridges follow: Cys-97–Cys-102 and Cys-196–Cys-212. The Nucleophile role is filled by Thr-243. Substrate-binding positions include 271 to 274 (RVGD) and 294 to 297 (TGDG). A disulfide bridge links Cys-354 with Cys-381.

The protein belongs to the Ntn-hydrolase family. In terms of assembly, heterotetramer of two alpha and two beta chains arranged as a dimer of alpha/beta heterodimers. In terms of processing, cleaved into an alpha and beta chain by autocatalysis; this activates the enzyme. The N-terminal residue of the beta subunit is responsible for the nucleophile hydrolase activity.

It carries out the reaction N(4)-(beta-N-acetyl-D-glucosaminyl)-L-asparagine + H2O = N-acetyl-beta-D-glucosaminylamine + L-aspartate + H(+). Functionally, cleaves the GlcNAc-Asn bond which joins oligosaccharides to the peptide of asparagine-linked glycoproteins. In Drosophila melanogaster (Fruit fly), this protein is Putative N(4)-(beta-N-acetylglucosaminyl)-L-asparaginase CG1827.